We begin with the raw amino-acid sequence, 218 residues long: Regulator of G-protein signaling 20 (218 aa).

Over residues 1 to 10 the composition is skewed to basic and acidic residues; sequence MGSERTEMRK. Residues 1–26 are disordered; that stretch reads MGSERTEMRKRQMAATQETPGTAQAQ. The span at 14 to 26 shows a compositional bias: polar residues; sequence AATQETPGTAQAQ. Residues 92–208 enclose the RGS domain; that stretch reads SFDKLMLTPA…MNSAIYKDLL (117 aa).

Forms a complex with G(alpha)z/i2 subunits and mu-opioid receptors; the formation of this complex results in mu-opioid receptor desensitization. Interacts with OPRM1. Fatty acylated. Heavily palmitoylated in the cysteine string motif. In terms of processing, N- and O-glycosylated in synapsomal membranes. Post-translationally, sumoylated by SUMO1 and SUM02 in synaptosomes. The sumoylated forms act as a scaffold for sequestering mu-opioid receptor-activated G(alpha) subunits.

The protein localises to the membrane. The protein resides in the nucleus. Its subcellular location is the cytoplasm. Functionally, inhibits signal transduction by increasing the GTPase activity of G protein alpha subunits thereby driving them into their inactive GDP-bound form. Binds selectively to G(z)-alpha and G(alpha)-i2 subunits, accelerates their GTPase activity and regulates their signaling activities. The G(z)-alpha activity is inhibited by the phosphorylation and palmitoylation of the G-protein. Negatively regulates mu-opioid receptor-mediated activation of the G-proteins. This chain is Regulator of G-protein signaling 20 (RGS20), found in Gallus gallus (Chicken).